The following is a 663-amino-acid chain: Oligopeptide-binding protein SarA (663 aa).

A signal peptide spans 1–22 (MKKGKILALAGVALLATGVLAA). C23 carries the N-palmitoyl cysteine lipid modification. C23 is lipidated: S-diacylglycerol cysteine. Positions 637 to 663 (QKAQEKWNKERAESNKKAQEELEKHVK) are disordered.

The protein belongs to the bacterial solute-binding protein 5 family.

It is found in the cell membrane. Functionally, may be involved in the expression of cell surface properties important for colonization of the human oral cavity. It may also be involved in uptake processes. This is Oligopeptide-binding protein SarA (sarA) from Streptococcus gordonii (strain Challis / ATCC 35105 / BCRC 15272 / CH1 / DL1 / V288).